Reading from the N-terminus, the 311-residue chain is Methionyl-tRNA formyltransferase (311 aa).

110-113 contributes to the (6S)-5,6,7,8-tetrahydrofolate binding site; it reads SLLP.

This sequence belongs to the Fmt family.

The catalysed reaction is L-methionyl-tRNA(fMet) + (6R)-10-formyltetrahydrofolate = N-formyl-L-methionyl-tRNA(fMet) + (6S)-5,6,7,8-tetrahydrofolate + H(+). Functionally, attaches a formyl group to the free amino group of methionyl-tRNA(fMet). The formyl group appears to play a dual role in the initiator identity of N-formylmethionyl-tRNA by promoting its recognition by IF2 and preventing the misappropriation of this tRNA by the elongation apparatus. In Streptococcus pneumoniae (strain JJA), this protein is Methionyl-tRNA formyltransferase.